Here is a 488-residue protein sequence, read N- to C-terminus: Catalase (488 aa).

The interval 1-26 is disordered; it reads MTDRKNLTTNQGVPVGDNQNSMTAGR. Residues 7-23 are compositionally biased toward polar residues; that stretch reads LTTNQGVPVGDNQNSMT. Residues His-55 and Asn-128 contribute to the active site. Tyr-338 serves as a coordination point for heme.

The protein belongs to the catalase family. It depends on heme as a cofactor.

It localises to the cytoplasm. It catalyses the reaction 2 H2O2 = O2 + 2 H2O. Its function is as follows. Decomposes hydrogen peroxide into water and oxygen; serves to protect cells from the toxic effects of hydrogen peroxide. The polypeptide is Catalase (kat) (Listeria monocytogenes serovar 1/2a (strain ATCC BAA-679 / EGD-e)).